Reading from the N-terminus, the 88-residue chain is Insertion element ISR1 uncharacterized 10 kDa protein A3 (88 aa).

Belongs to the transposase 8 family.

This Rhizobium sp protein is Insertion element ISR1 uncharacterized 10 kDa protein A3.